A 355-amino-acid polypeptide reads, in one-letter code: Glutamine synthetase root isozyme 4 (355 aa).

The GS beta-grasp domain occupies 19–99 (IIAEYIWIGG…VMCDCYTPAG (81 aa)). Residues 37–66 (ARTLPGPVTDPSKLPKWNYDGSSTGQAPGE) form a disordered region. Residues 106–355 (KRYSAAKIFS…IAETTIVWKP (250 aa)) form the GS catalytic domain.

It belongs to the glutamine synthetase family. As to quaternary structure, homooctamer. In terms of tissue distribution, found in all the tissues examined with higher expression found in tissues of the root, stem and seedling shoot.

The protein localises to the cytoplasm. The catalysed reaction is L-glutamate + NH4(+) + ATP = L-glutamine + ADP + phosphate + H(+). In terms of biological role, plays a role in the flow of nitrogen into nitrogenous organic compounds. In Zea mays (Maize), this protein is Glutamine synthetase root isozyme 4 (GLN5).